The sequence spans 111 residues: Small ribosomal subunit protein bS16 (111 aa).

The protein belongs to the bacterial ribosomal protein bS16 family.

This chain is Small ribosomal subunit protein bS16, found in Rickettsia bellii (strain OSU 85-389).